A 250-amino-acid polypeptide reads, in one-letter code: L-cystine transport system ATP-binding protein TcyN (250 aa).

Positions 4-244 (IEVKNLVKKF…PEQPRTRQFL (241 aa)) constitute an ABC transporter domain. 36–43 (GPSGSGKT) is an ATP binding site.

This sequence belongs to the ABC transporter superfamily. As to quaternary structure, the complex is composed of two ATP-binding proteins (TcyN), two transmembrane proteins (TcyL) and a solute-binding protein (TcyJ).

It is found in the cell inner membrane. It carries out the reaction L-cystine(out) + ATP + H2O = L-cystine(in) + ADP + phosphate + H(+). The enzyme catalyses D-cystine(out) + ATP + H2O = D-cystine(in) + ADP + phosphate + H(+). With respect to regulation, the TcyJLN system is inhibited by L-cystine, L-cysteine, DL-2,6-diaminopimelic acid and L-cystathionine, and is stimulated by D-cysteine. Its function is as follows. Part of the ABC transporter complex TcyJLN involved in L-cystine import. This high affinity cystine transporter is involved in resistance to oxidative stress by forming a L-cysteine/L-cystine shuttle system with the EamA transporter, which exports L-cysteine as reducing equivalents to the periplasm to prevent the cells from oxidative stress. Exported L-cysteine can reduce the periplasmic hydrogen peroxide to water, and then generated L-cystine is imported back into the cytoplasm via the TcyJLN complex. Functions at low cystine concentrations. The system can also transport L-cysteine, diaminopimelic acid (DAP), djenkolate, lanthionine, D-cystine, homocystine, and it mediates accumulation of the toxic compounds L-selenaproline (SCA) and L-selenocystine (SeCys). Could also facilitate threonine efflux. Responsible for energy coupling to the transport system. The protein is L-cystine transport system ATP-binding protein TcyN of Escherichia coli (strain K12).